The chain runs to 36 residues: Amanexitide proprotein 2 (36 aa).

Residues 1–10 constitute a propeptide that is removed on maturation; it reads MSDINATRLP. The segment at residues 11 to 19 is a cross-link (cyclopeptide (Val-Pro)); sequence VFSLPVFFP. Residues 20 to 36 constitute a propeptide that is removed on maturation; that stretch reads FVSDDIQAVLTRGESLC.

This sequence belongs to the MSDIN fungal toxin family. Processed by the macrocyclase-peptidase enzyme POPB to yield a toxic cyclic nonapeptide. POPB first removes 10 residues from the N-terminus. Conformational trapping of the remaining peptide forces the enzyme to release this intermediate rather than proceed to macrocyclization. The enzyme rebinds the remaining peptide in a different conformation and catalyzes macrocyclization of the N-terminal 9 residues. Expressed in basidiocarps.

Cyclic nonapeptide that belongs to the MSDIN-like toxin family responsible for a large number of food poisoning cases and deaths. This is Amanexitide proprotein 2 from Amanita exitialis (Guangzhou destroying angel).